A 511-amino-acid chain; its full sequence is Alpha-amylase 1A (511 aa).

The first 15 residues, 1 to 15 (MKLFWLLFTIGFCWA), serve as a signal peptide directing secretion. Gln-16 carries the pyrrolidone carboxylic acid modification. Disulfide bonds link Cys-43/Cys-101, Cys-85/Cys-130, and Cys-156/Cys-175. Ca(2+)-binding residues include Asn-115, Arg-173, and Asp-182. Arg-210 contacts chloride. Asp-212 functions as the Nucleophile in the catalytic mechanism. His-216 contacts Ca(2+). Catalysis depends on Glu-248, which acts as the Proton donor. The chloride site is built by Asn-313 and Arg-352. At Asn-365 the chain carries Deamidated asparagine; partial. Cys-393 and Cys-399 are joined by a disulfide. At Asn-427 the chain carries Deamidated asparagine; partial; alternate. A glycan (N-linked (GlcNAc...) asparagine) is linked at Asn-427. Cys-465 and Cys-477 are disulfide-bonded. A Deamidated asparagine; partial modification is found at Asn-474. N-linked (GlcNAc...) asparagine glycosylation is present at Asn-476.

This sequence belongs to the glycosyl hydrolase 13 family. In terms of assembly, monomer. Requires Ca(2+) as cofactor. Chloride serves as cofactor.

The protein localises to the secreted. It carries out the reaction Endohydrolysis of (1-&gt;4)-alpha-D-glucosidic linkages in polysaccharides containing three or more (1-&gt;4)-alpha-linked D-glucose units.. Its function is as follows. Calcium-binding enzyme that initiates starch digestion in the oral cavity. Catalyzes the hydrolysis of internal (1-&gt;4)-alpha-D-glucosidic bonds, yielding a mixture of maltose, isomaltose, small amounts of glucose as well as small linear and branched oligosaccharides called dextrins. The sequence is that of Alpha-amylase 1A from Homo sapiens (Human).